Consider the following 89-residue polypeptide: Small ribosomal subunit protein uS15 (89 aa).

Belongs to the universal ribosomal protein uS15 family. In terms of assembly, part of the 30S ribosomal subunit. Forms a bridge to the 50S subunit in the 70S ribosome, contacting the 23S rRNA.

Its function is as follows. One of the primary rRNA binding proteins, it binds directly to 16S rRNA where it helps nucleate assembly of the platform of the 30S subunit by binding and bridging several RNA helices of the 16S rRNA. Functionally, forms an intersubunit bridge (bridge B4) with the 23S rRNA of the 50S subunit in the ribosome. The polypeptide is Small ribosomal subunit protein uS15 (Pseudomonas fluorescens (strain ATCC BAA-477 / NRRL B-23932 / Pf-5)).